We begin with the raw amino-acid sequence, 25 residues long: ATP synthase subunit alpha, mitochondrial (25 aa).

It belongs to the ATPase alpha/beta chains family. In terms of assembly, F-type ATPases have 2 components, CF(1) - the catalytic core - and CF(0) - the membrane proton channel. CF(1) has five subunits: alpha(3), beta(3), gamma(1), delta(1), epsilon(1). CF(0) has three main subunits: a, b and c.

It localises to the mitochondrion. The protein resides in the mitochondrion inner membrane. Mitochondrial membrane ATP synthase (F(1)F(0) ATP synthase or Complex V) produces ATP from ADP in the presence of a proton gradient across the membrane which is generated by electron transport complexes of the respiratory chain. F-type ATPases consist of two structural domains, F(1) - containing the extramembraneous catalytic core, and F(0) - containing the membrane proton channel, linked together by a central stalk and a peripheral stalk. During catalysis, ATP synthesis in the catalytic domain of F(1) is coupled via a rotary mechanism of the central stalk subunits to proton translocation. Subunits alpha and beta form the catalytic core in F(1). Rotation of the central stalk against the surrounding alpha(3)beta(3) subunits leads to hydrolysis of ATP in three separate catalytic sites on the beta subunits. Subunit alpha does not bear the catalytic high-affinity ATP-binding sites. This chain is ATP synthase subunit alpha, mitochondrial (ATPA), found in Spinacia oleracea (Spinach).